We begin with the raw amino-acid sequence, 192 residues long: Phosphoheptose isomerase (192 aa).

Residues 36-192 (CVDSLAAGGK…DQVEAVAAPA (157 aa)) enclose the SIS domain. 51–53 (NGG) provides a ligand contact to substrate. Zn(2+) contacts are provided by His60 and Glu64. Residues Glu64, 93-94 (ND), 119-121 (TTS), Ser124, and Gln171 contribute to the substrate site. Zn(2+) is bound by residues Gln171 and His179.

It belongs to the SIS family. GmhA subfamily. In terms of assembly, homotetramer. The cofactor is Zn(2+).

Its subcellular location is the cytoplasm. The enzyme catalyses 2 D-sedoheptulose 7-phosphate = D-glycero-alpha-D-manno-heptose 7-phosphate + D-glycero-beta-D-manno-heptose 7-phosphate. It functions in the pathway carbohydrate biosynthesis; D-glycero-D-manno-heptose 7-phosphate biosynthesis; D-glycero-alpha-D-manno-heptose 7-phosphate and D-glycero-beta-D-manno-heptose 7-phosphate from sedoheptulose 7-phosphate: step 1/1. Functionally, catalyzes the isomerization of sedoheptulose 7-phosphate in D-glycero-D-manno-heptose 7-phosphate. The protein is Phosphoheptose isomerase of Paramagnetospirillum magneticum (strain ATCC 700264 / AMB-1) (Magnetospirillum magneticum).